Reading from the N-terminus, the 466-residue chain is Pyruvate kinase (466 aa).

A substrate-binding site is contributed by Arg32. Positions 34, 36, and 66 each coordinate K(+). Position 34 to 37 (34 to 37) interacts with ATP; it reads NTSH. Arg73 is an ATP binding site. Glu219 is a binding site for Mg(2+). Substrate contacts are provided by Gly242, Asp243, and Thr275. Asp243 contributes to the Mg(2+) binding site.

It belongs to the pyruvate kinase family. In terms of assembly, homotetramer. It depends on a divalent metal cation as a cofactor.

It catalyses the reaction pyruvate + ATP = phosphoenolpyruvate + ADP + H(+). It participates in carbohydrate degradation; glycolysis; pyruvate from D-glyceraldehyde 3-phosphate: step 5/5. With respect to regulation, allosterically activated by AMP and inhibited by ATP. This chain is Pyruvate kinase (pyk), found in Thermotoga maritima (strain ATCC 43589 / DSM 3109 / JCM 10099 / NBRC 100826 / MSB8).